The chain runs to 402 residues: Serine/threonine transporter SstT (402 aa).

The next 9 membrane-spanning stretches (helical) occupy residues 19 to 39, 43 to 63, 86 to 106, 138 to 158, 179 to 199, 212 to 232, 287 to 307, 327 to 347, and 354 to 374; these read IGVVIGLFLGILVPKASAIGL, LFVGGLKAIAPLLVFTLVISA, TFAAALIAVVVNYIFPLTLIL, AITEANYMSILFWAVIFGLAM, VVKWIINLAPIGIMGLVFTSI, LLILVLVGTMLFVALVVNPII, IPLGAAINMAGAAITINILTL, VVAAVSACGASGVTGGSLLLI, and FGISNDVAMQVVGVGFIVGVI.

The protein belongs to the dicarboxylate/amino acid:cation symporter (DAACS) (TC 2.A.23) family.

It is found in the cell membrane. The enzyme catalyses L-serine(in) + Na(+)(in) = L-serine(out) + Na(+)(out). The catalysed reaction is L-threonine(in) + Na(+)(in) = L-threonine(out) + Na(+)(out). Its function is as follows. Involved in the import of serine and threonine into the cell, with the concomitant import of sodium (symport system). In Streptococcus agalactiae serotype Ia (strain ATCC 27591 / A909 / CDC SS700), this protein is Serine/threonine transporter SstT.